A 166-amino-acid chain; its full sequence is Protein C2-DOMAIN ABA-RELATED 11 (166 aa).

An N-acetylmethionine modification is found at Met-1. Positions 1–103 (MGEPLGLLQV…ISVARLRHVV (103 aa)) constitute a C2 domain. Position 2 is an N-acetylglycine; in Protein C2-DOMAIN ABA-RELATED 11, N-terminally processed (Gly-2). The Ca(2+) site is built by Arg-21, Asp-22, Asp-27, Asp-73, Lys-74, Asp-75, and Asp-81.

It belongs to the plant CAR protein family. As to quaternary structure, binds to PYR/PYL/RCAR abscisic acid intracellular receptors in an ABA-independent manner, both at the plasma membrane and in the nucleus.

It localises to the cell membrane. The protein localises to the nucleus. Functionally, stimulates the GTPase/ATPase activities of Obg-like ATPases. Mediates the transient calcium-dependent interaction of PYR/PYL/RCAR abscisic acid (ABA) receptors with the plasma membrane and thus regulates ABA sensitivity. This Arabidopsis thaliana (Mouse-ear cress) protein is Protein C2-DOMAIN ABA-RELATED 11.